Consider the following 379-residue polypeptide: 3-dehydroquinate synthase (379 aa).

It belongs to the archaeal-type DHQ synthase family.

It carries out the reaction 2-amino-2,3,7-trideoxy-D-lyxo-hept-6-ulosonate + NAD(+) + H2O = 3-dehydroquinate + NH4(+) + NADH + H(+). Catalyzes the oxidative deamination and cyclization of 2-amino-3,7-dideoxy-D-threo-hept-6-ulosonic acid (ADH) to yield 3-dehydroquinate (DHQ), which is fed into the canonical shikimic pathway of aromatic amino acid biosynthesis. This Methanococcoides burtonii (strain DSM 6242 / NBRC 107633 / OCM 468 / ACE-M) protein is 3-dehydroquinate synthase.